The sequence spans 207 residues: Small ribosomal subunit protein uS4c (207 aa).

An S4 RNA-binding domain is found at 92-150 (MRLDNILFRLGFVPTIPSARQLINHRHILVNNRIVDVPSFHCKPKDIITIGSPKTYQSI).

Belongs to the universal ribosomal protein uS4 family. In terms of assembly, part of the 30S ribosomal subunit. Contacts protein S5. The interaction surface between S4 and S5 is involved in control of translational fidelity.

It is found in the plastid. The protein resides in the chloroplast. One of the primary rRNA binding proteins, it binds directly to 16S rRNA where it nucleates assembly of the body of the 30S subunit. Functionally, with S5 and S12 plays an important role in translational accuracy. The protein is Small ribosomal subunit protein uS4c (rps4) of Equisetum variegatum (Variegated horsetail).